A 275-amino-acid chain; its full sequence is UPF0328 protein ECU05_0050 (275 aa).

The protein belongs to the UPF0328 family.

The chain is UPF0328 protein ECU05_0050 from Encephalitozoon cuniculi (strain GB-M1) (Microsporidian parasite).